Consider the following 128-residue polypeptide: Protein ripply2 (128 aa).

Positions 1–64 (MDTTESAESA…ALPSGPGMAE (64 aa)) are disordered. Residues 17 to 28 (PSRSRCPPSAQP) are compositionally biased toward low complexity. The WRPW motif signature appears at 34–37 (WRPW). The interval 74–109 (HPVRLFWPKSKCYDYLYQEAETLLKNFPIQATISFY) is ripply homology domain.

This sequence belongs to the ripply family. Expressed in the embryonic anterior presomitic mesoderm. First expressed in S-I at 8.5 dpc, where expression is maintained until 13.5 dpc, with an additional stripe of expression sometimes seen in the rostral part of S0 and S-I.

The protein resides in the nucleus. Plays a role in somitogenesis. Required for somite segregation and establishment of rostrocaudal polarity in somites. The sequence is that of Protein ripply2 from Mus musculus (Mouse).